The sequence spans 319 residues: Lipoyl synthase (319 aa).

Residues 1-29 (MVVVVDTVSDKPIRPRHPEKAARPDALSP) are disordered. Basic and acidic residues predominate over residues 8 to 29 (VSDKPIRPRHPEKAARPDALSP). Residues cysteine 61, cysteine 66, cysteine 72, cysteine 87, cysteine 91, cysteine 94, and serine 300 each contribute to the [4Fe-4S] cluster site. The Radical SAM core domain maps to 73-289 (WDRKHATFMI…ESLAYAKGFL (217 aa)).

It belongs to the radical SAM superfamily. Lipoyl synthase family. [4Fe-4S] cluster is required as a cofactor.

The protein localises to the cytoplasm. It catalyses the reaction [[Fe-S] cluster scaffold protein carrying a second [4Fe-4S](2+) cluster] + N(6)-octanoyl-L-lysyl-[protein] + 2 oxidized [2Fe-2S]-[ferredoxin] + 2 S-adenosyl-L-methionine + 4 H(+) = [[Fe-S] cluster scaffold protein] + N(6)-[(R)-dihydrolipoyl]-L-lysyl-[protein] + 4 Fe(3+) + 2 hydrogen sulfide + 2 5'-deoxyadenosine + 2 L-methionine + 2 reduced [2Fe-2S]-[ferredoxin]. Its pathway is protein modification; protein lipoylation via endogenous pathway; protein N(6)-(lipoyl)lysine from octanoyl-[acyl-carrier-protein]: step 2/2. In terms of biological role, catalyzes the radical-mediated insertion of two sulfur atoms into the C-6 and C-8 positions of the octanoyl moiety bound to the lipoyl domains of lipoate-dependent enzymes, thereby converting the octanoylated domains into lipoylated derivatives. This is Lipoyl synthase from Rhodopseudomonas palustris (strain BisA53).